We begin with the raw amino-acid sequence, 376 residues long: Glucose-1-phosphate adenylyltransferase (376 aa).

Residues Tyr-101, Gly-166, 181-182, and Ser-192 each bind alpha-D-glucose 1-phosphate; that span reads EK.

It belongs to the bacterial/plant glucose-1-phosphate adenylyltransferase family. In terms of assembly, homotetramer.

It catalyses the reaction alpha-D-glucose 1-phosphate + ATP + H(+) = ADP-alpha-D-glucose + diphosphate. It functions in the pathway glycan biosynthesis; glycogen biosynthesis. Involved in the biosynthesis of ADP-glucose, a building block required for the elongation reactions to produce glycogen. Catalyzes the reaction between ATP and alpha-D-glucose 1-phosphate (G1P) to produce pyrophosphate and ADP-Glc. The polypeptide is Glucose-1-phosphate adenylyltransferase (Bacillus mycoides (strain KBAB4) (Bacillus weihenstephanensis)).